We begin with the raw amino-acid sequence, 318 residues long: Probable tyrosine phosphatase protein N1 (318 aa).

One can recognise a Tyrosine-protein phosphatase domain in the interval 26–292 (IVRLEHHQVI…LILQPGYYVL (267 aa)). Cys-233 serves as the catalytic Phosphocysteine intermediate.

The protein belongs to the protein-tyrosine phosphatase family.

The enzyme catalyses O-phospho-L-tyrosyl-[protein] + H2O = L-tyrosyl-[protein] + phosphate. This Microplitis demolitor bracovirus (isolate Webb) (MdBV) protein is Probable tyrosine phosphatase protein N1 (N3).